The following is a 348-amino-acid chain: Tetraacyldisaccharide 4'-kinase (348 aa).

Position 54–61 (54–61 (TVGGAGKT)) interacts with ATP.

This sequence belongs to the LpxK family.

The enzyme catalyses a lipid A disaccharide + ATP = a lipid IVA + ADP + H(+). The protein operates within glycolipid biosynthesis; lipid IV(A) biosynthesis; lipid IV(A) from (3R)-3-hydroxytetradecanoyl-[acyl-carrier-protein] and UDP-N-acetyl-alpha-D-glucosamine: step 6/6. Its function is as follows. Transfers the gamma-phosphate of ATP to the 4'-position of a tetraacyldisaccharide 1-phosphate intermediate (termed DS-1-P) to form tetraacyldisaccharide 1,4'-bis-phosphate (lipid IVA). In Agrobacterium fabrum (strain C58 / ATCC 33970) (Agrobacterium tumefaciens (strain C58)), this protein is Tetraacyldisaccharide 4'-kinase.